Reading from the N-terminus, the 546-residue chain is Glucose-6-phosphate isomerase (546 aa).

Glu355 (proton donor) is an active-site residue. Residues His386 and Lys510 contribute to the active site.

Belongs to the GPI family.

The protein resides in the cytoplasm. The enzyme catalyses alpha-D-glucose 6-phosphate = beta-D-fructose 6-phosphate. The protein operates within carbohydrate biosynthesis; gluconeogenesis. It functions in the pathway carbohydrate degradation; glycolysis; D-glyceraldehyde 3-phosphate and glycerone phosphate from D-glucose: step 2/4. In terms of biological role, catalyzes the reversible isomerization of glucose-6-phosphate to fructose-6-phosphate. The protein is Glucose-6-phosphate isomerase of Buchnera aphidicola subsp. Cinara cedri (strain Cc).